A 403-amino-acid chain; its full sequence is Aspartic endopeptidase PEP1 (403 aa).

The signal sequence occupies residues M1–A20. A propeptide spans A21–A67 (activation peptide). Positions Y82–A400 constitute a Peptidase A1 domain. D98 is an active-site residue. N159 and N270 each carry an N-linked (GlcNAc...) asparagine glycan. The active site involves D293. Residues C329 and C361 are joined by a disulfide bond.

This sequence belongs to the peptidase A1 family.

The protein resides in the secreted. The catalysed reaction is Hydrolysis of proteins with broad specificity. Generally favors hydrophobic residues in P1 and P1', but also accepts Lys in P1, which leads to activation of trypsinogen. Does not clot milk.. Functionally, secreted aspartic endopeptidase that allows assimilation of proteinaceous substrates. Can catalyze hydrolysis of the major structural proteins of basement membrane, elastin, collagen, and laminin. Thought to play a significant role in virulence. Its function is as follows. Can catalyze hydrolysis of the major structural proteins of basement membrane, elastin, collagen, and laminin. Thought to play a significant role in virulence. The polypeptide is Aspartic endopeptidase PEP1 (PEP1) (Trichophyton verrucosum (strain HKI 0517)).